A 51-amino-acid polypeptide reads, in one-letter code: uncharacterized protein (51 aa).

The segment at 1–28 (MQQPQNITTSSISNNNNNNTSLTLQQQQ) is disordered. A coiled-coil region spans residues 13–47 (SNNNNNNTSLTLQQQQEQLQQLQIKRKRNLMKQLQ).

This is an uncharacterized protein from Dictyostelium discoideum (Social amoeba).